Reading from the N-terminus, the 284-residue chain is MEAIKNKMQAMKLEKDNAIDRAEIAEQKSRDANLRAEKSEEEVRGLQKKIQQIENELDQVQESLTQANTKLEEKEKSLQTAEGDVAALNRRIQLIEEDLERSEGRLKIATSKLEEASQSADESERMRKMLEHRSITDEERMEGLESQLKEARMMAEDADRKYDEVARKLAMVEADLERAEERAETGESKIVELEEELRVVGNNLKSLEVSEEKAQQREEAYEQQIRIMTTKLKEAEARAEFAERSVQKLQKEVDRLEDELVHEKEKYKSISDELDQTFAELTGY.

A coiled-coil region spans residues 1-284; it reads MEAIKNKMQA…DQTFAELTGY (284 aa). Positions 22–43 are disordered; the sequence is AEIAEQKSRDANLRAEKSEEEV.

Belongs to the tropomyosin family. As to quaternary structure, homodimer.

Its function is as follows. Tropomyosin, in association with the troponin complex, plays a central role in the calcium dependent regulation of muscle contraction. This chain is Tropomyosin, found in Lepidoglyphus destructor (Storage mite).